The primary structure comprises 970 residues: Protein CLASP-3 (970 aa).

2 disordered regions span residues 314-377 (SRLA…QKAR) and 651-675 (NGISSGSGGSGNNHPKATPLRETPH). Positions 344–355 (GSRTRTSSITSN) are enriched in polar residues. The HEAT repeat unit spans residues 905-943 (ITPCVIKAYQSTSSSVRKTVVYCLVAMVNRVGEQRMAPH).

It belongs to the CLASP family.

The protein resides in the cytoplasm. The protein localises to the cytoskeleton. Functionally, microtubule plus-end tracking protein that promotes the stabilization of dynamic microtubules. This Caenorhabditis briggsae protein is Protein CLASP-3 (cls-3).